A 629-amino-acid polypeptide reads, in one-letter code: UvrABC system protein C (629 aa).

A GIY-YIG domain is found at 26-105; it reads TSPGIYQFKN…IKELKPRYNV (80 aa). The 36-residue stretch at 219–254 folds into the UVR domain; that stretch reads SALIRSLTENMHLAATELRFEQAAEIKAQIESLKRY.

This sequence belongs to the UvrC family. Interacts with UvrB in an incision complex.

The protein resides in the cytoplasm. Its function is as follows. The UvrABC repair system catalyzes the recognition and processing of DNA lesions. UvrC both incises the 5' and 3' sides of the lesion. The N-terminal half is responsible for the 3' incision and the C-terminal half is responsible for the 5' incision. The polypeptide is UvrABC system protein C (Chlorobium chlorochromatii (strain CaD3)).